The sequence spans 370 residues: MNVGIFIPIGNNGWLLSENAPQYKPSFELNKEITLTAERYGVDFVLSMIKLRGFGGKTEFWDHNLESFTLMAGLAAVTTKIKLFATAASLVMPPAIVARMASTIDSISNGRFGLNLVTGWQRPEYSQMGMWPGDQFFGTRYQYLSEYIQVLRELWGKGQSDFKGDHFQMDDCRLSPQPQADMKVICAGQSDAGMDFSARYADYNFCFGKGVNTPKAFAPAAEKLIEATRKTGRHVTTYVLMMVIADETDEAARAKWEHYKAGADHEAIAWLGQQGAADTRSGADTNVRQMADPTSAVNINMGTLVGSYATVARLLDEMAEVPGTEGVLLTFDDFVQGVAAFGERIQPLMKSRVHVQSPVPSQAEAERLAA.

Residues 49 to 50, Asn-115, Glu-124, 140 to 141, and Ser-190 contribute to the FMN site; these read IK and RY.

This sequence belongs to the NtaA/SnaA/DszA monooxygenase family. RutA subfamily.

The enzyme catalyses uracil + FMNH2 + NADH + O2 = (Z)-3-ureidoacrylate + FMN + NAD(+) + H2O + H(+). It catalyses the reaction thymine + FMNH2 + NADH + O2 = (Z)-2-methylureidoacrylate + FMN + NAD(+) + H2O + H(+). Its function is as follows. Catalyzes the pyrimidine ring opening between N-3 and C-4 by an unusual flavin hydroperoxide-catalyzed mechanism, adding oxygen atoms in the process to yield ureidoacrylate peracid, that immediately reacts with FMN forming ureidoacrylate and FMN-N(5)-oxide. The FMN-N(5)-oxide reacts spontaneously with NADH to produce FMN. Requires the flavin reductase RutF to regenerate FMN in vivo. This chain is Pyrimidine monooxygenase RutA, found in Variovorax paradoxus (strain S110).